A 2293-amino-acid chain; its full sequence is Protein Ycf2 (2293 aa).

1647–1654 (GSIGTGRS) lines the ATP pocket.

This sequence belongs to the Ycf2 family.

It localises to the plastid. Its subcellular location is the chloroplast stroma. Functionally, probable ATPase of unknown function. Its presence in a non-photosynthetic plant (Epifagus virginiana) and experiments in tobacco indicate that it has an essential function which is probably not related to photosynthesis. In Lobularia maritima (Sweet alyssum), this protein is Protein Ycf2.